We begin with the raw amino-acid sequence, 500 residues long: Aspartyl/glutamyl-tRNA(Asn/Gln) amidotransferase subunit B (500 aa).

It belongs to the GatB/GatE family. GatB subfamily. In terms of assembly, heterotrimer of A, B and C subunits.

The catalysed reaction is L-glutamyl-tRNA(Gln) + L-glutamine + ATP + H2O = L-glutaminyl-tRNA(Gln) + L-glutamate + ADP + phosphate + H(+). The enzyme catalyses L-aspartyl-tRNA(Asn) + L-glutamine + ATP + H2O = L-asparaginyl-tRNA(Asn) + L-glutamate + ADP + phosphate + 2 H(+). Its function is as follows. Allows the formation of correctly charged Asn-tRNA(Asn) or Gln-tRNA(Gln) through the transamidation of misacylated Asp-tRNA(Asn) or Glu-tRNA(Gln) in organisms which lack either or both of asparaginyl-tRNA or glutaminyl-tRNA synthetases. The reaction takes place in the presence of glutamine and ATP through an activated phospho-Asp-tRNA(Asn) or phospho-Glu-tRNA(Gln). The polypeptide is Aspartyl/glutamyl-tRNA(Asn/Gln) amidotransferase subunit B (Allorhizobium ampelinum (strain ATCC BAA-846 / DSM 112012 / S4) (Agrobacterium vitis (strain S4))).